Here is a 389-residue protein sequence, read N- to C-terminus: Jasmonate O-methyltransferase (389 aa).

Y18 contacts S-adenosyl-L-homocysteine. Residue Q25 coordinates jasmonate. Positions 60, 65, 97, 98, 142, and 143 each coordinate S-adenosyl-L-homocysteine. H163 and W164 together coordinate jasmonate. The Mg(2+) site is built by N186, D272, F274, and N275.

Belongs to the methyltransferase superfamily. Type-7 methyltransferase family. The cofactor is Mg(2+). Expressed in rosettes, cauline leaves and developing flowers but not in young seedlings.

It is found in the cytoplasm. It localises to the nucleus. It catalyses the reaction jasmonate + S-adenosyl-L-methionine = methyl (-)-jasmonate + S-adenosyl-L-homocysteine. It functions in the pathway lipid metabolism; oxylipin biosynthesis. Catalyzes the methylation of jasmonate into methyljasmonate, a plant volatile that acts as an important cellular regulator mediating diverse developmental processes and defense responses. The protein is Jasmonate O-methyltransferase of Arabidopsis thaliana (Mouse-ear cress).